A 3584-amino-acid chain; its full sequence is D-lysergyl-peptide-synthetase subunit 1 (3584 aa).

The segment at Ile-25 to Ala-44 is disordered. Residues Asn-29–Thr-39 show a composition bias toward basic and acidic residues. Positions Ser-307–Ile-706 are adenylation (A) domain 1. The Carrier 1 domain occupies Arg-848 to Thr-917. Ser-880 is subject to O-(pantetheine 4'-phosphoryl)serine. The segment at Glu-962–Asn-1353 is condensation (C) domain 1. The tract at residues Gln-1396–Arg-1803 is adenylation (A) domain 2. The 69-residue stretch at Thr-1948–Gly-2016 folds into the Carrier 2 domain. Ser-1980 is modified (O-(pantetheine 4'-phosphoryl)serine). The condensation (C) domain 2 stretch occupies residues Glu-2066–Met-2483. Residues Gln-2508–Arg-2906 are adenylation (A) domain 3. A Carrier 3 domain is found at Met-3041–Glu-3109. Ser-3073 is modified (O-(pantetheine 4'-phosphoryl)serine). Residues Leu-3174–Asp-3472 form a cyclization (Cyc) domain region.

This sequence belongs to the NRP synthetase family.

It participates in alkaloid biosynthesis; ergot alkaloid biosynthesis. Its function is as follows. D-lysergyl-peptide-synthetase subunit 1; part of the gene cluster that mediates the biosynthesis of fungal ergot alkaloid. DmaW catalyzes the first step of ergot alkaloid biosynthesis by condensing dimethylallyl diphosphate (DMAP) and tryptophan to form 4-dimethylallyl-L-tryptophan. The second step is catalyzed by the methyltransferase easF that methylates 4-dimethylallyl-L-tryptophan in the presence of S-adenosyl-L-methionine, resulting in the formation of 4-dimethylallyl-L-abrine. The catalase easC and the FAD-dependent oxidoreductase easE then transform 4-dimethylallyl-L-abrine to chanoclavine-I which is further oxidized by easD in the presence of NAD(+), resulting in the formation of chanoclavine-I aldehyde. Agroclavine dehydrogenase easG then mediates the conversion of chanoclavine-I aldehyde to agroclavine via a non-enzymatic adduct reaction: the substrate is an iminium intermediate that is formed spontaneously from chanoclavine-I aldehyde in the presence of glutathione. The presence of easA is not required to complete this reaction. Further conversion of agroclavine to paspalic acid is a two-step process involving oxidation of agroclavine to elymoclavine and of elymoclavine to paspalic acid, the second step being performed by the elymoclavine oxidase cloA. Paspalic acid is then further converted to D-lysergic acid. Ergopeptines are assembled from D-lysergic acid and three different amino acids by the D-lysergyl-peptide-synthetases composed each of a monomudular and a trimodular nonribosomal peptide synthetase subunit. LpsB and lpsC encode the monomodular subunits responsible for D-lysergic acid activation and incorporation into the ergopeptine backbone. LpsA1 and A2 subunits encode the trimodular nonribosomal peptide synthetase assembling the tripeptide portion of ergopeptines. LpsA1 is responsible for formation of the major ergopeptine, ergotamine, and lpsA2 for alpha-ergocryptine, the minor ergopeptine of the total alkaloid mixture elaborated by C.purpurea. D-lysergyl-tripeptides are assembled by the nonribosomal peptide synthetases and released as N-(D-lysergyl-aminoacyl)-lactams. Cyclolization of the D-lysergyl-tripeptides is performed by the Fe(2+)/2-ketoglutarate-dependent dioxygenase easH which introduces a hydroxyl group into N-(D-lysergyl-aminoacyl)-lactam at alpha-C of the aminoacyl residue followed by spontaneous condensation with the terminal lactam carbonyl group. In Claviceps purpurea (strain 20.1) (Ergot fungus), this protein is D-lysergyl-peptide-synthetase subunit 1.